Consider the following 297-residue polypeptide: NAD kinase (297 aa).

Catalysis depends on Asp-74, which acts as the Proton acceptor. NAD(+) is bound by residues 74-75 (DG), Arg-79, 148-149 (NE), Arg-176, Asp-178, 189-194 (TAYALS), and Gln-248.

The protein belongs to the NAD kinase family. The cofactor is a divalent metal cation.

The protein localises to the cytoplasm. The enzyme catalyses NAD(+) + ATP = ADP + NADP(+) + H(+). In terms of biological role, involved in the regulation of the intracellular balance of NAD and NADP, and is a key enzyme in the biosynthesis of NADP. Catalyzes specifically the phosphorylation on 2'-hydroxyl of the adenosine moiety of NAD to yield NADP. In Blochmanniella pennsylvanica (strain BPEN), this protein is NAD kinase.